A 399-amino-acid chain; its full sequence is Tryptophan synthase beta chain (399 aa).

K92 carries the N6-(pyridoxal phosphate)lysine modification.

It belongs to the TrpB family. Tetramer of two alpha and two beta chains. It depends on pyridoxal 5'-phosphate as a cofactor.

It catalyses the reaction (1S,2R)-1-C-(indol-3-yl)glycerol 3-phosphate + L-serine = D-glyceraldehyde 3-phosphate + L-tryptophan + H2O. It participates in amino-acid biosynthesis; L-tryptophan biosynthesis; L-tryptophan from chorismate: step 5/5. Its function is as follows. The beta subunit is responsible for the synthesis of L-tryptophan from indole and L-serine. In Legionella pneumophila subsp. pneumophila (strain Philadelphia 1 / ATCC 33152 / DSM 7513), this protein is Tryptophan synthase beta chain.